A 196-amino-acid chain; its full sequence is Late protein I196L (196 aa).

Repeat copies occupy residues 28-48 (SNYLTTAIANNTSISPTTSSN) and 49-68 (HITTAIPNNTSILPTTSSNH). A 3; approximate repeat occupies 69-87 (ITTAISNNITDKDDYTHFS).

Belongs to the asfivirus I196L family.

This Ornithodoros (relapsing fever ticks) protein is Late protein I196L.